A 284-amino-acid chain; its full sequence is ATP phosphoribosyltransferase (284 aa).

This sequence belongs to the ATP phosphoribosyltransferase family. Long subfamily. Equilibrium between an active dimeric form, an inactive hexameric form and higher aggregates. Interconversion between the various forms is largely reversible and is influenced by the natural substrates and inhibitors of the enzyme. Requires Mg(2+) as cofactor.

It is found in the cytoplasm. It carries out the reaction 1-(5-phospho-beta-D-ribosyl)-ATP + diphosphate = 5-phospho-alpha-D-ribose 1-diphosphate + ATP. It functions in the pathway amino-acid biosynthesis; L-histidine biosynthesis; L-histidine from 5-phospho-alpha-D-ribose 1-diphosphate: step 1/9. Feedback inhibited by histidine. Its function is as follows. Catalyzes the condensation of ATP and 5-phosphoribose 1-diphosphate to form N'-(5'-phosphoribosyl)-ATP (PR-ATP). Has a crucial role in the pathway because the rate of histidine biosynthesis seems to be controlled primarily by regulation of HisG enzymatic activity. In Mycobacterium bovis (strain ATCC BAA-935 / AF2122/97), this protein is ATP phosphoribosyltransferase (hisG).